Here is a 146-residue protein sequence, read N- to C-terminus: UPF0178 protein R01393 (146 aa).

It belongs to the UPF0178 family.

This Rhizobium meliloti (strain 1021) (Ensifer meliloti) protein is UPF0178 protein R01393.